Reading from the N-terminus, the 356-residue chain is Magnesium-protoporphyrin IX monomethyl ester [oxidative] cyclase (356 aa).

It belongs to the AcsF family. Requires Fe cation as cofactor.

The catalysed reaction is Mg-protoporphyrin IX 13-monomethyl ester + 3 NADPH + 3 O2 + 2 H(+) = 3,8-divinyl protochlorophyllide a + 3 NADP(+) + 5 H2O. The protein operates within porphyrin-containing compound metabolism; chlorophyll biosynthesis (light-independent). Functionally, catalyzes the formation of the isocyclic ring in chlorophyll biosynthesis. Mediates the cyclase reaction, which results in the formation of divinylprotochlorophyllide (Pchlide) characteristic of all chlorophylls from magnesium-protoporphyrin IX 13-monomethyl ester (MgPMME). The protein is Magnesium-protoporphyrin IX monomethyl ester [oxidative] cyclase of Parasynechococcus marenigrum (strain WH8102).